A 364-amino-acid chain; its full sequence is Aminomethyltransferase (364 aa).

The protein belongs to the GcvT family. As to quaternary structure, the glycine cleavage system is composed of four proteins: P, T, L and H.

The enzyme catalyses N(6)-[(R)-S(8)-aminomethyldihydrolipoyl]-L-lysyl-[protein] + (6S)-5,6,7,8-tetrahydrofolate = N(6)-[(R)-dihydrolipoyl]-L-lysyl-[protein] + (6R)-5,10-methylene-5,6,7,8-tetrahydrofolate + NH4(+). The glycine cleavage system catalyzes the degradation of glycine. The sequence is that of Aminomethyltransferase from Salmonella paratyphi B (strain ATCC BAA-1250 / SPB7).